Consider the following 1217-residue polypeptide: MLTPQRSAWSLKSKVSSEKPRSKGKGITKNLDSAATPFPPLGLLNGGDLDRGGEDMEAWKRFKDEGLLDESICYKKDRESLASRIIELEKDLHEYQYNMGLLLIEKKEWSSHFEEMKMRLAEAEEILKREQAAHIIALTESEKREDNLRKALGVEKQCVTDLEKALREMRSEIAEVKYTAEKKMTEAFALEASIEEKRLDTERKLHSADAKLAEASRKSSEINRKLEDVEDRERKVQRELNSINSERKALEKDISEQKEHLREWEKKLQDGQNRLLDGQRHINEREERINEAEGGLKKKEEELEEAKRSIEGTRNTLKRKEEDLDVRLRSLVSKEKEIELKMKNLQKKEKDLHEIAEKLDHREREEIQKLLDEHRATLDTKKREFELELESKRKSVDEELKSKFAAVNKAEKEVNRKQGLISEGEKELESKMDKIKIKEKDLETKSKALKKWEESLKSDEKKLVAEKDQIMKDTHELKVSINELESLRDALNAEQHQIAEEREKLEISKEEREQYIQKQSELKQEIEKYRNMQEELSKGIESLREEREKFEKEWESLDEKKITLQRETKKIHEEKEKLEKWHHKDQERLRNEEANAKADIERQLEDIKLQKEAFENTMKHERLMAQEEVARRLADVTRELELRKHDLEMNMQKKQEEIERKLQGKEREFETRKEAELSRITSLINLNNSKLQKLRIEQDRLDREKEEVELQKKKLQEDQSEIQRDVDTLRQLSKNLKNQRAEFIKEKECFLAAAERCKTCQNCGVSISELEMVGIIQSSAEIENADIVLPSLTDDHIEQHMKNKGSHVTSPQTGSRVFGSGFLQKCTKIFKFSPGKNAETSATTTPLVFGEELDIAASEDAAANDNNPAADVERVTVNPSLVFGEQLDTAASEDAAANDNNPAADVERVTVNPPPLAPVATEQNETEESSLPPENDSPPKQRGGRQSTRRGRGGKTVRRTRTMEAVVDDAKAILGDTLIVEEAKESSQQNDEQSQGASVHTGGTSNTRQKRRRAPASEMTNSEHDVEESESQSQSISIGRGRRKKRQTSAASEVQAPVVERRYNLRHSTVAKNSVAATLAVSDQAKVQTKASHQASHDNNQISMGDDPALEGSHKVTHTVQKTTTASVMEVSSKPAMEETHEENIVVRSVEISEMSASEEAEGEVQGVPPIAEEPATPSSGSSTSGDIGNDDDMDDDDEEERHNASIGKKLWNFFTT.

Residues 1 to 14 (MLTPQRSAWSLKSK) are compositionally biased toward polar residues. A disordered region spans residues 1-45 (MLTPQRSAWSLKSKVSSEKPRSKGKGITKNLDSAATPFPPLGLLN). Residues 159–746 (VTDLEKALRE…KNQRAEFIKE (588 aa)) adopt a coiled-coil conformation. The span at 892 to 904 (SEDAAANDNNPAA) shows a compositional bias: low complexity. Disordered stretches follow at residues 892 to 969 (SEDA…VVDD), 981 to 1057 (EEAK…VQAP), 1087 to 1117 (VQTKASHQASHDNNQISMGDDPALEGSHKVT), and 1152 to 1217 (ISEM…FFTT). A compositionally biased stretch (basic residues) spans 947–960 (STRRGRGGKTVRRT). Composition is skewed to polar residues over residues 986-1007 (SSQQNDEQSQGASVHTGGTSNT) and 1087-1103 (VQTKASHQASHDNNQIS). Positions 1173-1186 (EEPATPSSGSSTSG) are enriched in low complexity. Acidic residues predominate over residues 1189 to 1200 (GNDDDMDDDDEE).

The protein belongs to the CRWN family.

The protein resides in the nucleus matrix. It is found in the nucleus lamina. In terms of biological role, architectural component of nuclear structure that plays different roles in controlling nuclear size and morphology. Involved in the organization of multimeric complexes in the peripheral nucleoskeleton. The polypeptide is Nuclear matrix constituent protein 1 (Allium cepa (Onion)).